The sequence spans 292 residues: Aquaporin-3 (292 aa).

Residues 1–24 (MGRQKELVNRCGEMLHIRYRLLRQ) are Cytoplasmic-facing. Residues 25 to 42 (ALAECLGTLILVMFGCGS) traverse the membrane as a helical segment. Over 43–56 (VAQVVLSRGTHGGF) the chain is Extracellular. Residues 57 to 74 (LTINLAFGFAVTLGILIA) traverse the membrane as a helical segment. The Cytoplasmic segment spans residues 75–78 (GQVS). The segment at residues 79 to 92 (GAHLNPAVTFAMCF) is an intramembrane region (discontinuously helical). Positions 83–85 (NPA) match the NPA 1 motif. Residues 93–100 (LAREPWIK) are Cytoplasmic-facing. The helical transmembrane segment at 101–121 (LPVYTLAQTLGAFLGAGIIFG) threads the bilayer. Residues 122-159 (LYYDAIWAFANNQLIVSGPNGTAGIFATYPSGHLDMVN) are Extracellular-facing. N-linked (GlcNAc...) asparagine glycosylation is present at asparagine 141. The chain crosses the membrane as a helical span at residues 160 to 177 (GFFDQFIGTASLIVCVLA). The Cytoplasmic segment spans residues 178 to 189 (IVDPYNNPVPRG). The chain crosses the membrane as a helical span at residues 190–206 (LEAFTVGLVVLVIGTSM). Residues 207–210 (GFNS) lie on the Extracellular side of the membrane. Residues 211 to 224 (GYAVNPARDFGPRL) constitute an intramembrane region (discontinuously helical). The NPA 2 signature appears at 215–217 (NPA). Residues 225–242 (FTAIAGWGSEVFTTGRHW) are Extracellular-facing. Residues 243–264 (WWVPIVSPLLGSIAGVFVYQLM) traverse the membrane as a helical segment. Topologically, residues 265–292 (IGCHLEPPPPSTDEENVKLSHVKHKEQM) are cytoplasmic.

This sequence belongs to the MIP/aquaporin (TC 1.A.8) family. Homotetramer; each monomer provides an independent glycerol/water pore. Could also exist in other oligomeric states.

It localises to the cell membrane. Its subcellular location is the basolateral cell membrane. It catalyses the reaction glycerol(in) = glycerol(out). The catalysed reaction is H2O(in) = H2O(out). It carries out the reaction urea(in) = urea(out). The enzyme catalyses H2O2(out) = H2O2(in). Aquaglyceroporins form homotetrameric transmembrane channels, with each monomer independently mediating glycerol and water transport across the plasma membrane along their osmotic gradient. Could also be permeable to urea. Also participates in cell permeability to H2O2 and H2O2-mediated signaling. In skin, transports glycerol to the epidermis and stratum corneum, where it maintains hydration, elasticity, and supports lipid biosynthesis for barrier repair. In kidney, contributes to the reabsorption of water, helping the body maintain proper fluid balance. This chain is Aquaporin-3, found in Bos taurus (Bovine).